Reading from the N-terminus, the 325-residue chain is uncharacterized protein (325 aa).

A helical membrane pass occupies residues isoleucine 10–histidine 30. The 73-residue stretch at lysine 94–isoleucine 166 folds into the AB hydrolase-1 domain.

The protein localises to the cell membrane. This is an uncharacterized protein from Bacillus subtilis (strain 168).